Here is a 338-residue protein sequence, read N- to C-terminus: Solute carrier family 35 member G5 (338 aa).

A disordered region spans residues 1-27 (MAGSHPYFNLPDSTHPSPPSAPPSLRW). 9 helical membrane passes run 37–57 (TNGL…VGPL), 67–87 (LPSL…ALLL), 102–122 (GWAC…YSAV), 160–180 (CGLL…LWTL), 190–210 (TLGY…LLVY), 221–241 (TVAF…LFVL), 250–270 (LLSW…FTCV), 281–301 (LVCA…YYML), and 305–325 (VALS…IITA). The EamA 1 domain maps to 49 to 174 (LPAGFVGPLS…SILGLIIILG (126 aa)). An EamA 2 domain is found at 272 to 325 (YAVTKAHPALVCAVLHSEVVVALILQYYMLHETVALSDIMGAGVVLGSIAIITA).

Belongs to the SLC35G solute transporter family. In terms of tissue distribution, expressed in placenta and testis.

Its subcellular location is the membrane. This is Solute carrier family 35 member G5 (SLC35G5) from Homo sapiens (Human).